Reading from the N-terminus, the 500-residue chain is Glutamyl-tRNA(Gln) amidotransferase subunit A (500 aa).

Active-site charge relay system residues include lysine 93 and serine 168. Serine 192 functions as the Acyl-ester intermediate in the catalytic mechanism.

It belongs to the amidase family. GatA subfamily. As to quaternary structure, heterotrimer of A, B and C subunits.

The catalysed reaction is L-glutamyl-tRNA(Gln) + L-glutamine + ATP + H2O = L-glutaminyl-tRNA(Gln) + L-glutamate + ADP + phosphate + H(+). Its function is as follows. Allows the formation of correctly charged Gln-tRNA(Gln) through the transamidation of misacylated Glu-tRNA(Gln) in organisms which lack glutaminyl-tRNA synthetase. The reaction takes place in the presence of glutamine and ATP through an activated gamma-phospho-Glu-tRNA(Gln). In Corynebacterium jeikeium (strain K411), this protein is Glutamyl-tRNA(Gln) amidotransferase subunit A.